Here is a 386-residue protein sequence, read N- to C-terminus: Pepsin A (386 aa).

Positions 1 to 15 (MKWLLLISLVALSEC) are cleaved as a signal peptide. A propeptide spans 16–60 (AIVKVPLVRKKSLRQNLIEHGLLNDFLKNQSPNPASKYFPQEPTV) (activation peptide). Residues 74–383 (YFGTIGIGTP…DRANNQVGLA (310 aa)) enclose the Peptidase A1 domain. Aspartate 92 is a catalytic residue. 2 disulfides stabilise this stretch: cysteine 105-cysteine 110 and cysteine 266-cysteine 270. Aspartate 275 is an active-site residue. A disulfide bridge connects residues cysteine 309 and cysteine 342.

This sequence belongs to the peptidase A1 family.

Its subcellular location is the secreted. The enzyme catalyses Preferential cleavage: hydrophobic, preferably aromatic, residues in P1 and P1' positions. Cleaves 1-Phe-|-Val-2, 4-Gln-|-His-5, 13-Glu-|-Ala-14, 14-Ala-|-Leu-15, 15-Leu-|-Tyr-16, 16-Tyr-|-Leu-17, 23-Gly-|-Phe-24, 24-Phe-|-Phe-25 and 25-Phe-|-Tyr-26 bonds in the B chain of insulin.. Its function is as follows. Shows particularly broad specificity; although bonds involving phenylalanine and leucine are preferred, many others are also cleaved to some extent. This chain is Pepsin A (PGA), found in Canis lupus familiaris (Dog).